Consider the following 835-residue polypeptide: Transcription intermediary factor 1-beta (835 aa).

Positions 14-24 (AATAASAASGS) are enriched in low complexity. The segment at 14-57 (AATAASAASGSPGSGEGSAGGEKRPAASSAAAASASASSPAGGG) is disordered. Phosphoserine occurs at positions 24, 27, and 31. Lysine 36 is covalently cross-linked (Glycyl lysine isopeptide (Lys-Gly) (interchain with G-Cter in SUMO2)). The span at 39 to 53 (AASSAAAASASASSP) shows a compositional bias: low complexity. Serine 52 carries the phosphoserine modification. The RING-type zinc-finger motif lies at 67 to 123 (CGVCRERLRPERDPRLLPCLHSACSACLGPATPAAANNSGDGGSAGDGAMVDCPVCK). Residue lysine 129 forms a Glycyl lysine isopeptide (Lys-Gly) (interchain with G-Cter in SUMO2) linkage. Residue serine 140 is modified to Phosphoserine. The B box-type 1; atypical zinc finger occupies 150-197 (DANQCCTSCEDNAPATSYCVECSEPLCETCVEAHQRVKYTKDHTVRST). Residues cysteine 155, cysteine 158, cysteine 179, and histidine 183 each contribute to the Zn(2+) site. Lysine 201 is covalently cross-linked (Glycyl lysine isopeptide (Lys-Gly) (interchain with G-Cter in SUMO2)). The segment at 206–247 (ERTVYCNVHKHEPLVLFCESCDTLTCRDCQLNAHKDHQYQFL) adopts a B box-type 2 zinc-finger fold. Residues cysteine 211, histidine 214, cysteine 234, and histidine 239 each coordinate Zn(2+). The interval 248–378 (EDAVRNQRKL…LIYFQLHRAL (131 aa)) is leucine zipper alpha helical coiled-coil region. The segment at 249 to 378 (DAVRNQRKLL…LIYFQLHRAL (130 aa)) is interaction with MAGEC2. Glycyl lysine isopeptide (Lys-Gly) (interchain with G-Cter in SUMO2) cross-links involve residues lysine 256 and lysine 263. Lysine 268 is subject to N6-acetyllysine. Lysine 274 participates in a covalent cross-link: Glycyl lysine isopeptide (Lys-Gly) (interchain with G-Cter in SUMO2). Lysine 306 is modified (N6-acetyllysine; alternate). Lysine 306 participates in a covalent cross-link: Glycyl lysine isopeptide (Lys-Gly) (interchain with G-Cter in SUMO2); alternate. Residue lysine 321 forms a Glycyl lysine isopeptide (Lys-Gly) (interchain with G-Cter in SUMO2) linkage. Residue lysine 342 is modified to N6-acetyllysine. A Glycyl lysine isopeptide (Lys-Gly) (interchain with G-Cter in SUMO2) cross-link involves residue lysine 368. Positions 368–372 (KLIYF) are involved in binding PPP1CA. N6-acetyllysine; alternate is present on lysine 379. Residue lysine 379 forms a Glycyl lysine isopeptide (Lys-Gly) (interchain with G-Cter in SUMO2); alternate linkage. Residue lysine 379 forms a Glycyl lysine isopeptide (Lys-Gly) (interchain with G-Cter in SUMO1); alternate linkage. Lysine 409 is covalently cross-linked (Glycyl lysine isopeptide (Lys-Gly) (interchain with G-Cter in SUMO2)). Residues 413-481 (ERPGTNSTGP…SRSGEGEVSG (69 aa)) are disordered. At serine 419 the chain carries Phosphoserine. Residue lysine 436 forms a Glycyl lysine isopeptide (Lys-Gly) (interchain with G-Cter in SUMO2) linkage. Residues 436–445 (KQGSGSSQPM) show a composition bias toward polar residues. Phosphoserine occurs at positions 439 and 441. A Glycyl lysine isopeptide (Lys-Gly) (interchain with G-Cter in SUMO2); alternate cross-link involves residue lysine 470. Lysine 470 is covalently cross-linked (Glycyl lysine isopeptide (Lys-Gly) (interchain with G-Cter in SUMO1); alternate). Arginine 471 is modified (citrulline). Serine 472 carries the phosphoserine modification. The residue at position 473 (arginine 473) is a Citrulline. A phosphoserine mark is found at serine 474, serine 480, and serine 490. Residues 477–514 (GEVSGLMRKVPRVSLERLDLDLTSDSQPPVFKVFPGST) form an HP1 box region. The short motif at 482–495 (LMRKVPRVSLERLD) is the PxVxL motif element. At threonine 499 the chain carries Phosphothreonine. Serine 502 carries the phosphoserine modification. Residue lysine 508 forms a Glycyl lysine isopeptide (Lys-Gly) (interchain with G-Cter in SUMO2) linkage. Lysine 555 is covalently cross-linked (Glycyl lysine isopeptide (Lys-Gly) (interchain with G-Cter in SUMO2); alternate). A Glycyl lysine isopeptide (Lys-Gly) (interchain with G-Cter in SUMO); alternate cross-link involves residue lysine 555. Residue lysine 576 forms a Glycyl lysine isopeptide (Lys-Gly) (interchain with G-Cter in SUMO2) linkage. Serine 595 carries the post-translational modification Phosphoserine. A PHD-type zinc finger spans residues 626-673 (ATICRVCQKPGDLVMCNQCEFCFHLDCHLPSLQDVPGEEWSCSLCHVL). Lysine 677 is covalently cross-linked (Glycyl lysine isopeptide (Lys-Gly) (interchain with G-Cter in SUMO)). Serine 684, serine 690, and serine 698 each carry phosphoserine. The Bromo domain occupies 696–800 (KLSPANQRKC…RFFETRMNDA (105 aa)). Residue lysine 751 forms a Glycyl lysine isopeptide (Lys-Gly) (interchain with G-Cter in SUMO2); alternate linkage. Lysine 751 is covalently cross-linked (Glycyl lysine isopeptide (Lys-Gly) (interchain with G-Cter in SUMO1); alternate). Residue lysine 751 forms a Glycyl lysine isopeptide (Lys-Gly) (interchain with G-Cter in SUMO); alternate linkage. The residue at position 753 (serine 753) is a Phosphoserine. Residue tyrosine 756 is modified to Phosphotyrosine. A Phosphoserine modification is found at serine 758. N6-acetyllysine; alternate is present on residues lysine 771, lysine 775, and lysine 780. Glycyl lysine isopeptide (Lys-Gly) (interchain with G-Cter in SUMO2); alternate cross-links involve residues lysine 771, lysine 775, and lysine 780. A Glycyl lysine isopeptide (Lys-Gly) (interchain with G-Cter in SUMO1); alternate cross-link involves residue lysine 780. Serine 785 carries the phosphoserine modification. Lysine 805 participates in a covalent cross-link: Glycyl lysine isopeptide (Lys-Gly) (interchain with G-Cter in SUMO2). Serine 825 is subject to Phosphoserine; by ATM and ATR and dsDNA kinase.

It belongs to the TRIM/RBCC family. In terms of assembly, interacts with ZNF382. Interacts with SETX. Oligomer; the RBCC domain homotrimerizes and interacts with one molecule of KRAB to form the KRAB-KAP1 corepressor complex. Binding to a KRAB domain is an absolute requirement for silencing gene expression. Interacts with CEBPB and NR3C1. Interacts with a number of KRAB-ZFP proteins including ZNF10, ZFP53, ZFP68 and ZNF256. Interacts with NCOR1, NR3C1 and CHD3. Interacts with CEBPB (via the RING-type and PHD-type zinc fingers). Component of a ternary complex that includes TRIM28, a HP1 protein (CBX1, CBX3 OR CBX5), a KRAB domain-containing protein, and DNA. Interacts with CBX5 (via the PxVxL motif); the interaction occurs in interphase nuclei and competes for binding POGZ. Interacts with POGZ; the interaction competes for interaction with CBX5. Interacts with SETDB1; the interaction is enhanced by KAP1 sumoylation, stimulates SETDB1 histone methyltransferase activity and gene silencing. Interacts (via the PHD-type zinc finger) with UBE2I; the interaction is required for sumoylation and repressor activity. Component of the TRIM28/KAP1-ERBB4-MDM2 complex involved in connecting growth factor and DNA damage responses. Interacts directly with ERBB4; the interaction represses ERBB4-mediated transcription activity. Interacts with MDM2; the interaction contributes to p53/TP53 inactivation. Component of the TRIM28/KAP1-MDM2-p53/TP53; involved in regulating p53/TP53 stabilization and activity. Interacts (via the leucine zipper alpha helical coiled-coil) with E2F1 (central region); the interaction inhibits E2F1 acetylation and transcriptional activity. Interacts with PPP1CA; the interaction dephosphorylates TRIM28 at Ser-824 and forms a complex at the p21 promoter site. Interacts with PPP1CB; the interaction is weak but is increased on dephosphorylation at Ser-824. Interacts with SMARCAD1. Interacts with, and sumoylates IRF7. Interacts with MAGEC2. Part of a complex composed of TRIM28, HDAC1, HDAC2 and EHMT2. Interacts with AICDA. The large PER complex involved in the histone methylation is composed of at least PER2, CBX3, TRIM28, SUV39H1 and/or SUV39H2; CBX3 mediates the formation of the complex. Interacts with NR4A3; the interactions potentiates NR4A3 activity on NurRE promoter. Interacts (unphosphorylated or phosphorylated form) with ZBTB1 (via BTB domain). Probably part of a corepressor complex containing ZNF304, TRIM28, SETDB1 and DNMT1. Interacts with ATRX. Forms a complex with ATRX, SETDB1 and ZNF274. Interacts with ZFP568; the interaction mediates ZFP568 transcriptional repression activity. Interacts with RRP1B. Interacts with CRY1. Interacts with ZNF263; recruited to the SIX3 promoter along with other proteins involved in chromatin modification and transcriptional corepression where it contributes to transcriptional repression. Interacts with CYREN (via XLF motif). Interacts with TRIM17; this interaction prevents TRIM28 activity. Interacts with ZNF746. Interacts with PHF13. Interacts with ZNF354C. Interacts with ZNF432; the interaction is independent of PARP1. ATM-induced phosphorylation on Ser-825 represses sumoylation leading to the de-repression of expression of a subset of genes involved in cell cycle control and apoptosis in response to genotoxic stress. Dephosphorylation by the phosphatases, PPP1CA and PP1CB forms, allows sumoylation and expression of TRIM28 target genes. Post-translationally, sumoylation/desumoylation events regulate TRIM28-mediated transcriptional repression. Sumoylation is required for interaction with CHD3 and SETDB1 and the corepressor activity. Represses and is repressed by Ser-824 phosphorylation. Enhances the TRIM28 corepressor activity, inhibiting transcriptional activity of a number of genes including GADD45A and CDKN1A/p21. Lys-555, Lys-780 and Lys-805 are the major sites of sumoylation. In response to Dox-induced DNA damage, enhanced phosphorylation on Ser-825 prevents sumoylation and allows de-repression of CDKN1A/p21. In terms of processing, auto-ubiquitinated; enhanced by MAGEA2 and MAGEC2. Citrullinated by PADI4. Post-translationally, ADP-ribosylated by SIRT6, promoting TRIM28/KAP1 interaction with CBX5, thereby contributing to the packaging of LINE-1 retrotransposon elements into transcriptionally repressive heterochromatin.

The protein resides in the nucleus. It catalyses the reaction S-ubiquitinyl-[E2 ubiquitin-conjugating enzyme]-L-cysteine + [acceptor protein]-L-lysine = [E2 ubiquitin-conjugating enzyme]-L-cysteine + N(6)-ubiquitinyl-[acceptor protein]-L-lysine.. It participates in protein modification; protein sumoylation. Nuclear corepressor for KRAB domain-containing zinc finger proteins (KRAB-ZFPs). Mediates gene silencing by recruiting CHD3, a subunit of the nucleosome remodeling and deacetylation (NuRD) complex, and SETDB1 (which specifically methylates histone H3 at 'Lys-9' (H3K9me)) to the promoter regions of KRAB target genes. Enhances transcriptional repression by coordinating the increase in H3K9me, the decrease in histone H3 'Lys-9 and 'Lys-14' acetylation (H3K9ac and H3K14ac, respectively) and the disposition of HP1 proteins to silence gene expression. Recruitment of SETDB1 induces heterochromatinization. May play a role as a coactivator for CEBPB and NR3C1 in the transcriptional activation of ORM1. Also a corepressor for ERBB4. Inhibits E2F1 activity by stimulating E2F1-HDAC1 complex formation and inhibiting E2F1 acetylation. May serve as a partial backup to prevent E2F1-mediated apoptosis in the absence of RB1. Important regulator of CDKN1A/p21(CIP1). Has E3 SUMO-protein ligase activity toward itself via its PHD-type zinc finger. Also specifically sumoylates IRF7, thereby inhibiting its transactivation activity. Ubiquitinates p53/TP53 leading to its proteasomal degradation; the function is enhanced by MAGEC2 and MAGEA2, and possibly MAGEA3 and MAGEA6. Mediates the nuclear localization of KOX1, ZNF268 and ZNF300 transcription factors. In association with isoform 2 of ZFP90, is required for the transcriptional repressor activity of FOXP3 and the suppressive function of regulatory T-cells (Treg). Probably forms a corepressor complex required for activated KRAS-mediated promoter hypermethylation and transcriptional silencing of tumor suppressor genes (TSGs) or other tumor-related genes in colorectal cancer (CRC) cells. Required to maintain a transcriptionally repressive state of genes in undifferentiated embryonic stem cells (ESCs). In ESCs, in collaboration with SETDB1, is also required for H3K9me3 and silencing of endogenous and introduced retroviruses in a DNA-methylation independent-pathway. Associates at promoter regions of tumor suppressor genes (TSGs) leading to their gene silencing. The SETDB1-TRIM28-ZNF274 complex may play a role in recruiting ATRX to the 3'-exons of zinc finger genes with atypical chromatin signatures to establish or maintain/protect H3K9me3 at these transcriptionally active regions. This Rattus norvegicus (Rat) protein is Transcription intermediary factor 1-beta.